Reading from the N-terminus, the 504-residue chain is Deoxyguanosinetriphosphate triphosphohydrolase (504 aa).

The 208-residue stretch at 66–273 (RLTHSLEVQQ…MEAADDISYC (208 aa)) folds into the HD domain.

This sequence belongs to the dGTPase family. Type 1 subfamily. As to quaternary structure, homotetramer. Mg(2+) serves as cofactor.

It carries out the reaction dGTP + H2O = 2'-deoxyguanosine + triphosphate + H(+). Its function is as follows. dGTPase preferentially hydrolyzes dGTP over the other canonical NTPs. This Klebsiella pneumoniae subsp. pneumoniae (strain ATCC 700721 / MGH 78578) protein is Deoxyguanosinetriphosphate triphosphohydrolase.